A 590-amino-acid polypeptide reads, in one-letter code: Arginine--tRNA ligase (590 aa).

The short motif at 138–148 (ANPTGPLHIGH) is the 'HIGH' region element.

It belongs to the class-I aminoacyl-tRNA synthetase family. In terms of assembly, monomer.

It is found in the cytoplasm. The enzyme catalyses tRNA(Arg) + L-arginine + ATP = L-arginyl-tRNA(Arg) + AMP + diphosphate. The polypeptide is Arginine--tRNA ligase (Orientia tsutsugamushi (strain Ikeda) (Rickettsia tsutsugamushi)).